Consider the following 321-residue polypeptide: Glucokinase (321 aa).

8–13 (GDVGGT) is a binding site for ATP.

This sequence belongs to the bacterial glucokinase family.

The protein localises to the cytoplasm. It catalyses the reaction D-glucose + ATP = D-glucose 6-phosphate + ADP + H(+). The sequence is that of Glucokinase from Klebsiella pneumoniae subsp. pneumoniae (strain ATCC 700721 / MGH 78578).